Consider the following 346-residue polypeptide: UPF0065 protein in the TAR-I ttuE-ttuC' intergenic region (346 aa).

The first 46 residues, M1 to A46, serve as a signal peptide directing secretion.

This sequence belongs to the UPF0065 (bug) family.

It is found in the periplasm. The protein is UPF0065 protein in the TAR-I ttuE-ttuC' intergenic region of Agrobacterium vitis (Rhizobium vitis).